The chain runs to 372 residues: Queuine tRNA-ribosyltransferase (372 aa).

D92 functions as the Proton acceptor in the catalytic mechanism. Substrate contacts are provided by residues 92–96 (DSGGY), D146, Q188, and G215. Residues 246–252 (GIGSLKE) are RNA binding. Residue D265 is the Nucleophile of the active site. Residues 270-274 (TRLGR) form an RNA binding; important for wobble base 34 recognition region. C303, C305, C308, and H334 together coordinate Zn(2+).

It belongs to the queuine tRNA-ribosyltransferase family. Homodimer. Within each dimer, one monomer is responsible for RNA recognition and catalysis, while the other monomer binds to the replacement base PreQ1. Zn(2+) serves as cofactor.

The enzyme catalyses 7-aminomethyl-7-carbaguanine + guanosine(34) in tRNA = 7-aminomethyl-7-carbaguanosine(34) in tRNA + guanine. Its pathway is tRNA modification; tRNA-queuosine biosynthesis. In terms of biological role, catalyzes the base-exchange of a guanine (G) residue with the queuine precursor 7-aminomethyl-7-deazaguanine (PreQ1) at position 34 (anticodon wobble position) in tRNAs with GU(N) anticodons (tRNA-Asp, -Asn, -His and -Tyr). Catalysis occurs through a double-displacement mechanism. The nucleophile active site attacks the C1' of nucleotide 34 to detach the guanine base from the RNA, forming a covalent enzyme-RNA intermediate. The proton acceptor active site deprotonates the incoming PreQ1, allowing a nucleophilic attack on the C1' of the ribose to form the product. After dissociation, two additional enzymatic reactions on the tRNA convert PreQ1 to queuine (Q), resulting in the hypermodified nucleoside queuosine (7-(((4,5-cis-dihydroxy-2-cyclopenten-1-yl)amino)methyl)-7-deazaguanosine). The protein is Queuine tRNA-ribosyltransferase of Prochlorococcus marinus (strain MIT 9301).